Consider the following 287-residue polypeptide: mRNA-capping enzyme regulatory subunit OPG124 (287 aa).

The protein belongs to the orthopoxvirus mRNA-capping enzyme regulatory subunit family. As to quaternary structure, interacts with the catalytic subunit OPG113.

Its subcellular location is the virion. Functionally, regulatory subunit of the mRNA cap enzyme which stabilizes the catalytic subunit and enhances its methyltransferase activity through an allosteric mechanism. Heterodimeric mRNA capping enzyme catalyzes the linkage of a N7-methyl-guanosine moiety to the first transcribed nucleotide (cap 0 structure), whereas the methyltransferase OPG102 is responsible for a second methylation at the 2'-O position of the ribose (cap 1 structure). Also involved in early viral gene transcription termination and intermediate viral gene transcription initiation. Early gene transcription termination requires the termination factor VTF, the DNA-dependent ATPase NPH-I/OPG123 and the RAP94/OPG109 subunit of the viral RNA polymerase, as well as the presence of a specific termination motif. Binds, together with RAP94/OPG109, to the termination motif 5'-UUUUUNU-3' in the nascent early mRNA. The sequence is that of mRNA-capping enzyme regulatory subunit OPG124 (OPG124) from Vaccinia virus (strain Copenhagen) (VACV).